The chain runs to 844 residues: Receptor-like protein 49 (844 aa).

Residues 1–31 (MMYSCRERRMITVKWSLCLIFCLSNSILVFA) form the signal peptide. Topologically, residues 32-803 (KHLCLPDQRD…QDEEKEEEEQ (772 aa)) are extracellular. Asn-59, Asn-95, Asn-112, and Asn-159 each carry an N-linked (GlcNAc...) asparagine glycan. 25 LRR repeats span residues 102-126 (QHLQKLYLGCNTSFGSLSYNDGLKG), 136-160 (LKYLKVLSLRGCNLFGKIPSSLGNL), 161-183 (SYLTHLDLSFNDFTGVIPDSMGN), 185-208 (NYLRVLNLGKCNFYGKVPSSLGNL), 209-231 (SYLAQLDLSYNDFTREGPDSMGN), 242-265 (LNSLTDIDLGSNQLKGMLPSNMSS), 266-290 (LSKLEYFYIGGNSFSGSIPSSLFMI), 292-313 (SLVELDLQRNHFSALEIGNISS), 315-339 (SKLQVLILGGNNFNPDIVDLSIFSP), 345-362 (YLDVSGINLKISSTVSLP), 363-385 (SPIEYLVLSSCNISEFPKFLRNQ), 386-409 (TKLYSLDISANQIEGQVPEWLWSL), 410-434 (PELQSINISHNSFNGFEGPADVIQG), 436-457 (GELYMLDISSNIFQDPFPLLPV), 458-481 (DSMNFLFSSNNRFSGEIPKTICEL), 482-504 (DNLVMLVLSNNNFSGSIPRCFEN), 506-527 (HLYVLHLRNNNLSGIFPEEAIS), 528-551 (DRLQSLDVGHNLFSGELPKSLINC), 553-574 (ALEFLYVEDNRISDTFPSWLEL), 575-601 (LPNFQILVLRSNEFYGPIFSPGDSLSF), 602-625 (PRLRIFDISENRFTGVLPSDYFAP), 665-689 (FTIYKTIDVSGNRLEGDIPESISLL), 690-713 (KELIVLNMSNNAFTGHIPPSLSNL), 714-737 (SNLQSLDLSQNRLSGSIPGELGEL), and 739-762 (FLARMNFSYNRLEGPIPQTTQIQT). The N-linked (GlcNAc...) asparagine glycan is linked to Asn-207. Asn-262 is a glycosylation site (N-linked (GlcNAc...) asparagine). N-linked (GlcNAc...) asparagine glycosylation occurs at Asn-310. N-linked (GlcNAc...) asparagine glycans are attached at residues Asn-374 and Asn-384. An N-linked (GlcNAc...) asparagine glycan is attached at Asn-416. N-linked (GlcNAc...) asparagine glycans are attached at residues Asn-493, Asn-516, and Asn-550. Residues Asn-696 and Asn-712 are each glycosylated (N-linked (GlcNAc...) asparagine). Residue Asn-744 is glycosylated (N-linked (GlcNAc...) asparagine). The helical transmembrane segment at 804–824 (VFSWIAAAIGYVPGVVCGLTI) threads the bilayer. At 825-844 (GHILVSHKRDWFMRIVSLFT) the chain is on the cytoplasmic side.

This sequence belongs to the RLP family.

The protein localises to the cell membrane. The protein is Receptor-like protein 49 of Arabidopsis thaliana (Mouse-ear cress).